Reading from the N-terminus, the 279-residue chain is Pantothenate synthetase (279 aa).

Residue 31-38 coordinates ATP; the sequence is MGALHEGH. The active-site Proton donor is the His38. Residue Gln62 coordinates (R)-pantoate. Gln62 provides a ligand contact to beta-alanine. 148 to 151 serves as a coordination point for ATP; sequence GEKD. (R)-pantoate is bound at residue Gln154. Residues Val177 and 185–188 each bind ATP; that span reads LSSR.

The protein belongs to the pantothenate synthetase family. As to quaternary structure, homodimer.

The protein localises to the cytoplasm. It carries out the reaction (R)-pantoate + beta-alanine + ATP = (R)-pantothenate + AMP + diphosphate + H(+). The protein operates within cofactor biosynthesis; (R)-pantothenate biosynthesis; (R)-pantothenate from (R)-pantoate and beta-alanine: step 1/1. Catalyzes the condensation of pantoate with beta-alanine in an ATP-dependent reaction via a pantoyl-adenylate intermediate. This Cereibacter sphaeroides (strain ATCC 17023 / DSM 158 / JCM 6121 / CCUG 31486 / LMG 2827 / NBRC 12203 / NCIMB 8253 / ATH 2.4.1.) (Rhodobacter sphaeroides) protein is Pantothenate synthetase.